Here is a 583-residue protein sequence, read N- to C-terminus: 5-aminolevulinate synthase, erythroid-specific, mitochondrial (583 aa).

Arg-158 contributes to the succinyl-CoA binding site. Pyridoxal 5'-phosphate is bound by residues Cys-253 and Phe-254. The succinyl-CoA site is built by Ser-275 and Arg-294. Residues Ser-327, His-355, and Thr-383 each coordinate pyridoxal 5'-phosphate. Residue Lys-386 is part of the active site. An N6-(pyridoxal phosphate)lysine modification is found at Lys-386. Pyridoxal 5'-phosphate contacts are provided by Thr-415 and Thr-416. Thr-503 contacts succinyl-CoA.

This sequence belongs to the class-II pyridoxal-phosphate-dependent aminotransferase family. As to quaternary structure, homodimer. It depends on pyridoxal 5'-phosphate as a cofactor.

The protein localises to the mitochondrion inner membrane. The enzyme catalyses succinyl-CoA + glycine + H(+) = 5-aminolevulinate + CO2 + CoA. The protein operates within porphyrin-containing compound metabolism; protoporphyrin-IX biosynthesis; 5-aminolevulinate from glycine: step 1/1. Functionally, catalyzes the pyridoxal 5'-phosphate (PLP)-dependent condensation of succinyl-CoA and glycine to form aminolevulinic acid (ALA), with CoA and CO2 as by-products. Contributes significantly to heme formation during erythropoiesis. The sequence is that of 5-aminolevulinate synthase, erythroid-specific, mitochondrial (alas2) from Danio rerio (Zebrafish).